The chain runs to 497 residues: Probable cytosol aminopeptidase (497 aa).

Mn(2+) contacts are provided by K263 and D268. K275 is an active-site residue. Mn(2+)-binding residues include D286, D345, and E347. Residue R349 is part of the active site.

This sequence belongs to the peptidase M17 family. The cofactor is Mn(2+).

Its subcellular location is the cytoplasm. It carries out the reaction Release of an N-terminal amino acid, Xaa-|-Yaa-, in which Xaa is preferably Leu, but may be other amino acids including Pro although not Arg or Lys, and Yaa may be Pro. Amino acid amides and methyl esters are also readily hydrolyzed, but rates on arylamides are exceedingly low.. It catalyses the reaction Release of an N-terminal amino acid, preferentially leucine, but not glutamic or aspartic acids.. Functionally, presumably involved in the processing and regular turnover of intracellular proteins. Catalyzes the removal of unsubstituted N-terminal amino acids from various peptides. The sequence is that of Probable cytosol aminopeptidase from Brucella suis biovar 1 (strain 1330).